A 146-amino-acid chain; its full sequence is BCL7-like protein (146 aa).

Residues 59–146 (MAPPKIKEVK…RDAEMTSKQP (88 aa)) form a disordered region. 2 stretches are compositionally biased toward polar residues: residues 75–90 (NQVPSAENSQDSTSVT) and 113–134 (DSNQTFEPQNYQGGATGSTDFS). The span at 135 to 146 (SMRDAEMTSKQP) shows a compositional bias: basic and acidic residues.

The protein belongs to the BCL7 family. In terms of tissue distribution, ubiquitous.

The protein localises to the nucleus. Its function is as follows. Required for the terminal differentiation of seam cells, and the differentiation of distal tip cells important for normal somatic gonad and germ cell development. Plays a role in the Wnt signaling pathway, regulating the expression of beta-catenin homologs wrm-1, bar-1 and sys-1, and the localization of wrm-1 and the wnt signaling pathway component pop-1 during asymmetric cell division of seam cells and the Z-cell lineage of the somatic gonad, respectively. May have a pro-apoptotic role, possibly linked to the negative regulation of expression of anti-apoptotic factor ced-9. This chain is BCL7-like protein, found in Caenorhabditis elegans.